An 820-amino-acid chain; its full sequence is Catenin beta (820 aa).

Over residues 1–16 (MEQARYSNQQSVNPQQ) the composition is skewed to polar residues. A disordered region spans residues 1-74 (MEQARYSNQQ…SRHEDGGEEA (74 aa)). The span at 52–63 (SSATSHPPSVSS) shows a compositional bias: low complexity. ARM repeat units follow at residues 157–196 (NYQD…QLSK), 199–239 (ASRH…NLSH), 241–280 (RAGL…NLLL), 283–322 (EGSK…ILAY), 367–405 (HNNK…RNLS), 406–445 (DCHR…NLTC), 448–489 (SRNK…HVTS), 495–535 (EMGQ…NLAL), 603–642 (SHNR…ELSL), and 644–683 (KQGA…RMSD). Residues 708–811 (PWGDPLDMPS…LDSIPPADNT (104 aa)) are disordered. Residues 785 to 796 (GMDPGLPDMGPP) show a composition bias toward low complexity.

This sequence belongs to the beta-catenin family.

It localises to the cytoplasm. It is found in the cytoskeleton. Its function is as follows. Binds to the cytoplasmic domain of the cell-cell adhesion molecule E-cadherin, and perhaps to other (membrane) proteins. The association of catenins to cadherins produces a complex which is linked to the actin filament network, and which seems to be of primary importance for cadherins cell-adhesion properties. The chain is Catenin beta from Tripneustes gratilla (Hawaian sea urchin).